A 442-amino-acid chain; its full sequence is Coiled-coil domain-containing protein 112 (442 aa).

Coiled-coil stretches lie at residues 23 to 116 (LEEL…RRIE) and 217 to 249 (LEEK…VDTV). Disordered stretches follow at residues 245-272 (KVDT…KKQK), 289-312 (KLAS…QRQS), and 392-442 (EKVE…RQGI). 2 stretches are compositionally biased toward basic and acidic residues: residues 256–268 (KAED…EEQR) and 294–310 (LREE…ERQR). The stretch at 281 to 400 (RKSLEMSAKL…KEKVENNVSR (120 aa)) forms a coiled coil.

It is found in the cytoplasm. The protein localises to the cytoskeleton. It localises to the microtubule organizing center. The protein resides in the centrosome. Its subcellular location is the centriolar satellite. This Mus musculus (Mouse) protein is Coiled-coil domain-containing protein 112 (Ccdc112).